We begin with the raw amino-acid sequence, 58 residues long: Cyclotide trypsin inhibitor TopI1 (58 aa).

The N-terminal stretch at 1 to 23 (MKFIIVLLLLTALTLTSIPVIEG) is a signal peptide. The segment at residues 24–55 (ILKRCKTYDDCKDVCKARKGKCEFGICKCMIK) is a cross-link (cyclopeptide (Ile-Lys)). 3 disulfide bridges follow: C28/C45, C34/C50, and C38/C52. S56 is modified (serine amide).

In terms of processing, this is a cyclic peptide. In terms of tissue distribution, expressed by the venom gland.

It is found in the secreted. In terms of biological role, first cyclic scorpion trypsin inhibitor (Kd~0.5 nM). Does not inhibit chymotrypsin. This chain is Cyclotide trypsin inhibitor TopI1, found in Tityus obscurus (Amazonian scorpion).